We begin with the raw amino-acid sequence, 488 residues long: Probable glycine dehydrogenase (decarboxylating) subunit 2 (488 aa).

Lys274 carries the N6-(pyridoxal phosphate)lysine modification.

Belongs to the GcvP family. C-terminal subunit subfamily. In terms of assembly, the glycine cleavage system is composed of four proteins: P, T, L and H. In this organism, the P 'protein' is a heterodimer of two subunits. Pyridoxal 5'-phosphate serves as cofactor.

It catalyses the reaction N(6)-[(R)-lipoyl]-L-lysyl-[glycine-cleavage complex H protein] + glycine + H(+) = N(6)-[(R)-S(8)-aminomethyldihydrolipoyl]-L-lysyl-[glycine-cleavage complex H protein] + CO2. The glycine cleavage system catalyzes the degradation of glycine. The P protein binds the alpha-amino group of glycine through its pyridoxal phosphate cofactor; CO(2) is released and the remaining methylamine moiety is then transferred to the lipoamide cofactor of the H protein. This Listeria welshimeri serovar 6b (strain ATCC 35897 / DSM 20650 / CCUG 15529 / CIP 8149 / NCTC 11857 / SLCC 5334 / V8) protein is Probable glycine dehydrogenase (decarboxylating) subunit 2.